The sequence spans 258 residues: Transcription factor TT2 (258 aa).

HTH myb-type domains are found at residues 11–63 and 64–118; these read REEL…KNYL and RPGI…RKRL. 2 DNA-binding regions (H-T-H motif) span residues 39–63 and 91–114; these read WSTL…KNYL and WSLI…NSNL. 47 to 54 contacts ATP; sequence GLKRCGKS.

As to quaternary structure, interacts with BHLH2/EGL3/MYC146, BHLH12/MYC1 and BHLH42/TT8. Expressed at a high level in immature siliques and at a lower level in flowers. Undetected in young seedlings, roots, leaves and inflorescence stems.

The protein resides in the nucleus. Transcription activator, when associated with BHLH2/EGL3/MYC146, BHLH12/MYC1, or BHLH42/TT8. Involved in the control of flavonoid late metabolism in developing siliques. Plays a key role in determining the tissue-specific activation of leucoanthocyanidin reductase (BANYULS). This chain is Transcription factor TT2 (TT2), found in Arabidopsis thaliana (Mouse-ear cress).